The chain runs to 429 residues: Adenylosuccinate synthetase (429 aa).

GTP-binding positions include glycine 12–lysine 18 and glycine 40–threonine 42. Residue aspartate 13 is the Proton acceptor of the active site. Residues aspartate 13 and glycine 40 each coordinate Mg(2+). IMP-binding positions include aspartate 13–lysine 16, asparagine 38–histidine 41, threonine 129, arginine 143, glutamine 223, threonine 238, and arginine 302. Histidine 41 (proton donor) is an active-site residue. Valine 298–arginine 304 contacts substrate. GTP contacts are provided by residues arginine 304, lysine 330–aspartate 332, and serine 412–serine 414.

The protein belongs to the adenylosuccinate synthetase family. Homodimer. Requires Mg(2+) as cofactor.

It is found in the cytoplasm. The catalysed reaction is IMP + L-aspartate + GTP = N(6)-(1,2-dicarboxyethyl)-AMP + GDP + phosphate + 2 H(+). It participates in purine metabolism; AMP biosynthesis via de novo pathway; AMP from IMP: step 1/2. In terms of biological role, plays an important role in the de novo pathway of purine nucleotide biosynthesis. Catalyzes the first committed step in the biosynthesis of AMP from IMP. This Bartonella bacilliformis (strain ATCC 35685 / KC583 / Herrer 020/F12,63) protein is Adenylosuccinate synthetase.